The primary structure comprises 366 residues: Transmembrane protein 25 (366 aa).

A signal peptide spans 1 to 26 (MALPPGPAALRHTLLLLPALLSSGWG). At 27–232 (ELEPQIDGQT…APGLLATRVE (206 aa)) the chain is on the extracellular side. The Ig-like domain occupies 30–123 (PQIDGQTWAE…SGRSANASVI (94 aa)). Residues Cys-52 and Cys-107 are joined by a disulfide bond. Residues Asn-106, Asn-162, Asn-175, Asn-192, and Asn-205 are each glycosylated (N-linked (GlcNAc...) asparagine). The helical transmembrane segment at 233 to 253 (VPLLGIVVAAGLALGTLVGFS) threads the bilayer. Topologically, residues 254 to 366 (TLVACLVCRK…SSVSSDEIWL (113 aa)) are cytoplasmic. The segment covering 299–308 (PSNLQLNDLT) has biased composition (polar residues). The disordered stretch occupies residues 299–335 (PSNLQLNDLTPDSRAVKPADRQMAQNNSRPELLDPEP).

Interacts with GRIN2B. Expressed throughout the brain with higher levels in the pyramidal cell layer of the hippocampal CA1 and CA3 regions. Also highly expressed within the hippocampal dentate gyrus region and cerebellum and in scattered neurons in the cerebral cortex.

The protein resides in the cell membrane. The protein localises to the secreted. Its subcellular location is the late endosome. It localises to the lysosome. In terms of biological role, in neurons, modulates the degradation of NMDA receptor GRIN2B subunit. Plays a role in the regulation of neuronal excitability. In Homo sapiens (Human), this protein is Transmembrane protein 25 (TMEM25).